A 78-amino-acid polypeptide reads, in one-letter code: MLTKVFQSGNSQAVRIPMDFRFDVDTVEIFRKENGDVVLRPVSKKTDDFLALFEGFDETFIQALEARDDLPPQERENL.

In terms of domain architecture, SpoVT-AbrB spans 3 to 44 (TKVFQSGNSQAVRIPMDFRFDVDTVEIFRKENGDVVLRPVSK).

It belongs to the VapB family. As to quaternary structure, forms multimers, as well forming as a complex with VapC1.

Functionally, antitoxin component of a type II toxin-antitoxin (TA) system. Upon expression in E.coli neutralizes the effect of toxin VapC1. In vitro inhibits the RNase activity of VapC1. The sequence is that of Antitoxin VapB1 (vapB1) from Haemophilus influenzae (strain R2866).